Consider the following 352-residue polypeptide: Quinolinate synthase (352 aa).

H48 and S69 together coordinate iminosuccinate. C114 contacts [4Fe-4S] cluster. Iminosuccinate contacts are provided by residues 140–142 and S157; that span reads YAN. Residue C201 participates in [4Fe-4S] cluster binding. Residues 227–229 and T244 each bind iminosuccinate; that span reads HPE. C298 is a [4Fe-4S] cluster binding site.

The protein belongs to the quinolinate synthase family. Type 1 subfamily. [4Fe-4S] cluster is required as a cofactor.

Its subcellular location is the cytoplasm. The enzyme catalyses iminosuccinate + dihydroxyacetone phosphate = quinolinate + phosphate + 2 H2O + H(+). Its pathway is cofactor biosynthesis; NAD(+) biosynthesis; quinolinate from iminoaspartate: step 1/1. Catalyzes the condensation of iminoaspartate with dihydroxyacetone phosphate to form quinolinate. The polypeptide is Quinolinate synthase (Pseudomonas syringae pv. syringae (strain B728a)).